Here is a 290-residue protein sequence, read N- to C-terminus: Ribosomal RNA small subunit methyltransferase A (290 aa).

S-adenosyl-L-methionine contacts are provided by asparagine 27, leucine 29, glycine 54, glutamate 75, aspartate 100, and asparagine 125.

The protein belongs to the class I-like SAM-binding methyltransferase superfamily. rRNA adenine N(6)-methyltransferase family. RsmA subfamily.

The protein resides in the cytoplasm. It carries out the reaction adenosine(1518)/adenosine(1519) in 16S rRNA + 4 S-adenosyl-L-methionine = N(6)-dimethyladenosine(1518)/N(6)-dimethyladenosine(1519) in 16S rRNA + 4 S-adenosyl-L-homocysteine + 4 H(+). Specifically dimethylates two adjacent adenosines (A1518 and A1519) in the loop of a conserved hairpin near the 3'-end of 16S rRNA in the 30S particle. May play a critical role in biogenesis of 30S subunits. The protein is Ribosomal RNA small subunit methyltransferase A of Streptococcus sanguinis (strain SK36).